A 200-amino-acid polypeptide reads, in one-letter code: Holliday junction branch migration complex subunit RuvA (200 aa).

Residues 1 to 64 (MIAHLTGLVG…EDAFLLYGFA (64 aa)) form a domain I region. The domain II stretch occupies residues 65–143 (EAAERDWFRL…RMPAGPGVTI (79 aa)). The segment at 144–147 (AAPP) is flexible linker. Positions 148-200 (ASGGVEADALLALAGLGFRRAEAQPVVGRILARLDGKADLDVVIRESLRELAR) are domain III.

It belongs to the RuvA family. Homotetramer. Forms an RuvA(8)-RuvB(12)-Holliday junction (HJ) complex. HJ DNA is sandwiched between 2 RuvA tetramers; dsDNA enters through RuvA and exits via RuvB. An RuvB hexamer assembles on each DNA strand where it exits the tetramer. Each RuvB hexamer is contacted by two RuvA subunits (via domain III) on 2 adjacent RuvB subunits; this complex drives branch migration. In the full resolvosome a probable DNA-RuvA(4)-RuvB(12)-RuvC(2) complex forms which resolves the HJ.

The protein resides in the cytoplasm. In terms of biological role, the RuvA-RuvB-RuvC complex processes Holliday junction (HJ) DNA during genetic recombination and DNA repair, while the RuvA-RuvB complex plays an important role in the rescue of blocked DNA replication forks via replication fork reversal (RFR). RuvA specifically binds to HJ cruciform DNA, conferring on it an open structure. The RuvB hexamer acts as an ATP-dependent pump, pulling dsDNA into and through the RuvAB complex. HJ branch migration allows RuvC to scan DNA until it finds its consensus sequence, where it cleaves and resolves the cruciform DNA. The chain is Holliday junction branch migration complex subunit RuvA from Gluconacetobacter diazotrophicus (strain ATCC 49037 / DSM 5601 / CCUG 37298 / CIP 103539 / LMG 7603 / PAl5).